A 432-amino-acid polypeptide reads, in one-letter code: MTKTETINLRGPLKGEFEVPGDKSMTHRAIMLSSLAQGQSVITKPLLAEDCLRTMKIFELLGVNFDIKDDKVFVDSPGYQNFKTPHQSLYTGNSGTTTRIMAGLLSGIGIQSVLSGDESIGKRPMNRVIDPLKEMGASITGIENNYTPLVINPSDIQGIDYKMPVASAQVKSAILFASLFSKTASTITEIGITRNHTETMFEHYNIPLKINGNVIQTIPDAITSIKVKDFTVPGDISSAAFFIVAALITPGSDITIHNVGMNSTRSGIIDIVKEMKGNIEIINQTNTSEPTASIRIQYTPDLQPAELSGELITRAIDEIPIVALLCTQANGSSVIKDAEELKFKETNRIETTSDELGLLGFEVHPTDDGFIIHPSKFEHAASVSSYTDHRIGMTLAIASLLSDETLAIRNFDSVNTSFPEFLPLLKSISQKG.

3 residues coordinate 3-phosphoshikimate: lysine 23, serine 24, and arginine 28. Lysine 23 serves as a coordination point for phosphoenolpyruvate. Positions 95 and 123 each coordinate phosphoenolpyruvate. 3-phosphoshikimate is bound by residues serine 167, glutamine 169, aspartate 317, and lysine 344. Glutamine 169 provides a ligand contact to phosphoenolpyruvate. Residue aspartate 317 is the Proton acceptor of the active site. Arginine 348 and arginine 390 together coordinate phosphoenolpyruvate.

It belongs to the EPSP synthase family. As to quaternary structure, monomer.

The protein localises to the cytoplasm. It carries out the reaction 3-phosphoshikimate + phosphoenolpyruvate = 5-O-(1-carboxyvinyl)-3-phosphoshikimate + phosphate. It functions in the pathway metabolic intermediate biosynthesis; chorismate biosynthesis; chorismate from D-erythrose 4-phosphate and phosphoenolpyruvate: step 6/7. Its function is as follows. Catalyzes the transfer of the enolpyruvyl moiety of phosphoenolpyruvate (PEP) to the 5-hydroxyl of shikimate-3-phosphate (S3P) to produce enolpyruvyl shikimate-3-phosphate and inorganic phosphate. The protein is 3-phosphoshikimate 1-carboxyvinyltransferase of Staphylococcus carnosus (strain TM300).